Here is an 89-residue protein sequence, read N- to C-terminus: Small ribosomal subunit protein bS20 (89 aa).

A compositionally biased stretch (basic residues) spans 1-12 (MANHKSAIKRHR). A disordered region spans residues 1–26 (MANHKSAIKRHRQSVERAGRNRAART).

This sequence belongs to the bacterial ribosomal protein bS20 family.

In terms of biological role, binds directly to 16S ribosomal RNA. The sequence is that of Small ribosomal subunit protein bS20 from Desulfovibrio desulfuricans (strain ATCC 27774 / DSM 6949 / MB).